The following is a 407-amino-acid chain: Aminomethyltransferase, mitochondrial (407 aa).

The transit peptide at 1–29 (MRGGLWQLGQSITRRLGQSDKKTIARRCY) directs the protein to the mitochondrion. Substrate is bound by residues Glu234, Arg265, and Tyr403.

This sequence belongs to the GcvT family. As to quaternary structure, the glycine cleavage system is composed of four proteins: P, T, L and H.

Its subcellular location is the mitochondrion. The catalysed reaction is N(6)-[(R)-S(8)-aminomethyldihydrolipoyl]-L-lysyl-[protein] + (6S)-5,6,7,8-tetrahydrofolate = N(6)-[(R)-dihydrolipoyl]-L-lysyl-[protein] + (6R)-5,10-methylene-5,6,7,8-tetrahydrofolate + NH4(+). Functionally, the glycine cleavage system catalyzes the degradation of glycine. This Flaveria pringlei protein is Aminomethyltransferase, mitochondrial (GDCST).